The following is a 156-amino-acid chain: Small ribosomal subunit protein uS7 (156 aa).

It belongs to the universal ribosomal protein uS7 family. Part of the 30S ribosomal subunit. Contacts proteins S9 and S11.

Its function is as follows. One of the primary rRNA binding proteins, it binds directly to 16S rRNA where it nucleates assembly of the head domain of the 30S subunit. Is located at the subunit interface close to the decoding center, probably blocks exit of the E-site tRNA. The protein is Small ribosomal subunit protein uS7 of Cupriavidus necator (strain ATCC 17699 / DSM 428 / KCTC 22496 / NCIMB 10442 / H16 / Stanier 337) (Ralstonia eutropha).